Reading from the N-terminus, the 323-residue chain is MDSDASLVSSRPSSPEPDDLFLPARSKGGSSSGFTGGTVSSSTPSDCPPELSSELRGAMGASGAHPGDKLGGGGFKSSSSSTSSSTSSAATSSTKKDKKQMTEPELQQLRLKINSRERKRMHDLNIAMDGLREVMPYAHGPSVRKLSKIATLLLARNYILMLTNSLEEMKRLVSEIYGGHHAGFHPSACGGLAHSAPLPTATAHPAAAAHAAHHPAVHHPILPPAAAAAAAAAAAAAVSSASLPGSGLSSVGSIRPPHGLLKSPSAAAAAPLGGGGGGSGGSGGFQHWGGMPCPCSMCQVPPPHHHVSAMGAGTLPRLTSDAK.

The segment covering 1–13 (MDSDASLVSSRPS) has biased composition (polar residues). The tract at residues 1–107 (MDSDASLVSS…KKQMTEPELQ (107 aa)) is disordered. Low complexity predominate over residues 77–93 (SSSSSTSSSTSSAATSS). The bHLH domain occupies 108-162 (QLRLKINSRERKRMHDLNIAMDGLREVMPYAHGPSVRKLSKIATLLLARNYILML).

As to quaternary structure, interacts with NKX2-2. Interacts with ZNF488. In terms of tissue distribution, expressed specifically in the brain.

The protein localises to the nucleus. Its subcellular location is the cytoplasm. Required for oligodendrocyte and motor neuron specification in the spinal cord, as well as for the development of somatic motor neurons in the hindbrain. Functions together with ZNF488 to promote oligodendrocyte differentiation. Cooperates with OLIG1 to establish the pMN domain of the embryonic neural tube. Antagonist of V2 interneuron and of NKX2-2-induced V3 interneuron development. The polypeptide is Oligodendrocyte transcription factor 2 (Olig2) (Mus musculus (Mouse)).